A 137-amino-acid polypeptide reads, in one-letter code: Prefoldin subunit alpha (137 aa).

Belongs to the prefoldin subunit alpha family. In terms of assembly, heterohexamer of two alpha and four beta subunits.

The protein localises to the cytoplasm. Molecular chaperone capable of stabilizing a range of proteins. Seems to fulfill an ATP-independent, HSP70-like function in archaeal de novo protein folding. The polypeptide is Prefoldin subunit alpha (pfdA) (Archaeoglobus fulgidus (strain ATCC 49558 / DSM 4304 / JCM 9628 / NBRC 100126 / VC-16)).